Reading from the N-terminus, the 344-residue chain is Dihydroorotase (344 aa).

Positions 13 and 15 each coordinate Zn(2+). Residues 15-17 (HLR) and Asn41 each bind substrate. Zn(2+) contacts are provided by Lys98, His135, and His173. Residue Lys98 is modified to N6-carboxylysine. His135 contacts substrate. Leu218 is a substrate binding site. A Zn(2+)-binding site is contributed by Asp247. The active site involves Asp247. Substrate-binding residues include His251 and Ala263.

Belongs to the metallo-dependent hydrolases superfamily. DHOase family. Class II DHOase subfamily. Homodimer. Zn(2+) serves as cofactor.

The catalysed reaction is (S)-dihydroorotate + H2O = N-carbamoyl-L-aspartate + H(+). It participates in pyrimidine metabolism; UMP biosynthesis via de novo pathway; (S)-dihydroorotate from bicarbonate: step 3/3. Functionally, catalyzes the reversible cyclization of carbamoyl aspartate to dihydroorotate. This chain is Dihydroorotase, found in Neisseria gonorrhoeae (strain NCCP11945).